The chain runs to 126 residues: Aspartate 1-decarboxylase (126 aa).

Ser25 serves as the catalytic Schiff-base intermediate with substrate; via pyruvic acid. Pyruvic acid (Ser) is present on Ser25. Thr57 serves as a coordination point for substrate. Tyr58 functions as the Proton donor in the catalytic mechanism. Gly72–Ala74 is a binding site for substrate.

This sequence belongs to the PanD family. Heterooctamer of four alpha and four beta subunits. Requires pyruvate as cofactor. In terms of processing, is synthesized initially as an inactive proenzyme, which is activated by self-cleavage at a specific serine bond to produce a beta-subunit with a hydroxyl group at its C-terminus and an alpha-subunit with a pyruvoyl group at its N-terminus.

The protein resides in the cytoplasm. It carries out the reaction L-aspartate + H(+) = beta-alanine + CO2. Its pathway is cofactor biosynthesis; (R)-pantothenate biosynthesis; beta-alanine from L-aspartate: step 1/1. In terms of biological role, catalyzes the pyruvoyl-dependent decarboxylation of aspartate to produce beta-alanine. This is Aspartate 1-decarboxylase from Campylobacter jejuni subsp. jejuni serotype O:23/36 (strain 81-176).